The primary structure comprises 517 residues: Cytochrome P450 monooxygenase 124 (517 aa).

Residues 3–23 (SLLVLFVSLLALGALKKHLDF) traverse the membrane as a helical segment. Cys-453 contributes to the heme binding site.

This sequence belongs to the cytochrome P450 family. The cofactor is heme.

Its subcellular location is the membrane. It participates in secondary metabolite biosynthesis. Its function is as follows. Cytochrome P450 monooxygenase that is able to use trans-stilbene as a substrate for oxidation. The sequence is that of Cytochrome P450 monooxygenase 124 from Postia placenta (strain ATCC 44394 / Madison 698-R) (Brown rot fungus).